Consider the following 198-residue polypeptide: Small ribosomal subunit protein uS7 (198 aa).

It belongs to the universal ribosomal protein uS7 family. In terms of assembly, part of the 30S ribosomal subunit.

Functionally, one of the primary rRNA binding proteins, it binds directly to 16S rRNA where it nucleates assembly of the head domain of the 30S subunit. Is located at the subunit interface close to the decoding center. This is Small ribosomal subunit protein uS7 from Nanoarchaeum equitans (strain Kin4-M).